Consider the following 1346-residue polypeptide: Pikromycin polyketide synthase component PikAIV (1346 aa).

Residues 3 to 32 (SSNEQLVDALRASLKENEELRKESRRRADR) are a coiled coil. The 428-residue stretch at 34–461 (QEPMAIVGMS…GTNAHVVLEE (428 aa)) folds into the Ketosynthase family 3 (KS3) domain. Positions 37–1332 (MAIVGMSCRF…HAPAVAEAVL (1296 aa)) are module 6. Catalysis depends on for beta-ketoacyl synthase activity residues C207, H342, and H382. The acyltransferase stretch occupies residues 562-844 (FVFPGQGTQW…VLTMTLPDKV (283 aa)). S652 (acyl-ester intermediate; for acyltransferase activity) is an active-site residue. The 76-residue stretch at 945–1020 (SAVLAMVMRQ…ALAERISDEL (76 aa)) folds into the Carrier domain. S980 is subject to O-(pantetheine 4'-phosphoryl)serine. The disordered stretch occupies residues 1028–1050 (AEPSDHEQAEEEKAAAPAGARSG). Positions 1030–1041 (PSDHEQAEEEKA) are enriched in basic and acidic residues. T1125 provides a ligand contact to substrate. Positions 1127-1332 (ANGGPHEFLR…HAPAVAEAVL (206 aa)) are thioesterase. The active-site Nucleophile; for thioesterase activity is the S1196. 2 residues coordinate substrate: G1197 and D1224. H1316 serves as the catalytic Proton acceptor; for thioesterase activity.

In terms of assembly, homodimer. Pikromycin PKS consists of a combination of multimodular (PikAI and PikAII) and monomodular (PikAIII and PikAIV) polypeptides each coding for a functional synthase subunit which participates in 1 (monomodular) or 2 (multimodular) of the six FAS-like elongation steps required for formation of the polyketide. Module 1, 2, 3, 4, 5, and 6 participating in biosynthesis steps 1, 2, 3, 4, 5, and 6, respectively. Pantetheine 4'-phosphate serves as cofactor.

The enzyme catalyses 5 (S)-methylmalonyl-CoA + malonyl-CoA + 5 NADPH + 11 H(+) = 10-deoxymethynolide + 6 CO2 + 5 NADP(+) + 6 CoA + 2 H2O. The catalysed reaction is 6 (S)-methylmalonyl-CoA + malonyl-CoA + 5 NADPH + 12 H(+) = narbonolide + 7 CO2 + 5 NADP(+) + 7 CoA + 2 H2O. The protein operates within antibiotic biosynthesis. Its activity is regulated as follows. Irreversibly inhibited by (2S,3R,4S)-2,4-dihydroxy-3-methylhexyl-phosphonic acid and (3R,4S)-4-hydroxy-3-methyl-2-oxohexyl-phosphonic acid. In terms of biological role, involved in the biosynthesis of 12- and 14-membered ring macrolactone antibiotics such as methymycin and neomethymycin, and pikromycin and narbomycin, respectively. Component of the pikromycin PKS which catalyzes the biosynthesis of both precursors 10-deoxymethynolide (12-membered ring macrolactone) and narbonolide (14-membered ring macrolactone). Chain elongation through PikAI, PikAII and PikAIII followed by thioesterase catalyzed termination results in the production of 10-deoxymethynolide, while continued elongation through PikAIV, followed by thioesterase (TE) catalyzed cyclization results in the biosynthesis of the narbonolide. The thioesterase can use a series of diketide-N-acetylcysteamine (SNAC) thioesters, but has a strong preference for the 2-methyl-3-ketopentanoyl-SNAC over the stereoisomers of 2-methyl-3-hydroxyacyl-SNAC. The protein is Pikromycin polyketide synthase component PikAIV of Streptomyces venezuelae.